The chain runs to 274 residues: Proteasome subunit beta type-5-A (274 aa).

The propeptide at 1-57 (MKLDTSGFETSMPMIGFGSSSDMLDELSSVPSFDLPRTKEFDGFQKKAKDMLKHAKG) is removed in mature form. Thr-58 acts as the Nucleophile in catalysis.

This sequence belongs to the peptidase T1B family. Component of the 20S core complex of the 26S proteasome. The 26S proteasome is composed of a core protease (CP), known as the 20S proteasome, capped at one or both ends by the 19S regulatory particle (RP/PA700). The 20S proteasome core is composed of 28 subunits that are arranged in four stacked rings, resulting in a barrel-shaped structure. The two end rings are each formed by seven alpha subunits, and the two central rings are each formed by seven beta subunits. The catalytic chamber with the active sites is on the inside of the barrel. In terms of tissue distribution, ubiquitous low levels, higher expression in siliques and flowers.

The protein localises to the cytoplasm. It is found in the nucleus. The catalysed reaction is Cleavage of peptide bonds with very broad specificity.. In terms of biological role, the proteasome is a multicatalytic proteinase complex which is characterized by its ability to cleave peptides with Arg, Phe, Tyr, Leu, and Glu adjacent to the leaving group at neutral or slightly basic pH. The proteasome has an ATP-dependent proteolytic activity. The sequence is that of Proteasome subunit beta type-5-A (PBE1) from Arabidopsis thaliana (Mouse-ear cress).